The sequence spans 115 residues: Large ribosomal subunit protein bL20c (115 aa).

Belongs to the bacterial ribosomal protein bL20 family.

Its subcellular location is the plastid. It is found in the organellar chromatophore. Binds directly to 23S ribosomal RNA and is necessary for the in vitro assembly process of the 50S ribosomal subunit. It is not involved in the protein synthesizing functions of that subunit. This chain is Large ribosomal subunit protein bL20c, found in Paulinella chromatophora.